Here is a 210-residue protein sequence, read N- to C-terminus: MLQLGLRVLGCKASSVLRASTCLAGRAGRKEAGWECGGARSFSSSAVTMAPIKVGDAIPSVEVFEGEPGKKVNLAELFKGKKGVLFGVPGAFTPGCSKTHLPGFVEQAGALKAKGAQVVACLSVNDVFVIEEWGRAHQAEGKVRLLADPTGAFGKATDLLLDDSLVSLFGNRRLKRFSMVIDNGIVKALNVEPDGTGLTCSLAPNILSQL.

The N-terminal 48 residues, 1–48 (MLQLGLRVLGCKASSVLRASTCLAGRAGRKEAGWECGGARSFSSSAVT), are a transit peptide targeting the mitochondrion. Residues 52–210 (IKVGDAIPSV…SLAPNILSQL (159 aa)) form the Thioredoxin domain. K70 is modified (N6-acetyllysine; alternate). K70 bears the N6-succinyllysine; alternate mark. K71 carries the post-translational modification N6-acetyllysine. An N6-acetyllysine; alternate modification is found at K79. K79 bears the N6-succinyllysine; alternate mark. C96 functions as the Cysteine sulfenic acid (-SOH) intermediate in the catalytic mechanism. C96 carries S-palmitoyl cysteine lipidation. C96 and C200 are joined by a disulfide. K112 carries the post-translational modification N6-succinyllysine. A phosphoserine mark is found at S167 and S178. The Microbody targeting signal signature appears at 208–210 (SQL).

It belongs to the peroxiredoxin family. Prx5 subfamily. Monomer. Post-translationally, S-palmitoylated. Palmitoylation occurs on the active site, inhibiting its reactivity; therefore PRDX5 palmitoylation status determines its antioxidant capacity. S-palmitoylated. Depalmitoylated by ABHD10. Widely expressed.

The protein localises to the mitochondrion. The protein resides in the cytoplasm. Its subcellular location is the peroxisome matrix. It carries out the reaction a hydroperoxide + [thioredoxin]-dithiol = an alcohol + [thioredoxin]-disulfide + H2O. Functionally, thiol-specific peroxidase that catalyzes the reduction of hydrogen peroxide and organic hydroperoxides to water and alcohols, respectively. Plays a role in cell protection against oxidative stress by detoxifying peroxides and as sensor of hydrogen peroxide-mediated signaling events. The polypeptide is Peroxiredoxin-5, mitochondrial (Mus musculus (Mouse)).